A 305-amino-acid polypeptide reads, in one-letter code: UDP-3-O-acyl-N-acetylglucosamine deacetylase (305 aa).

Residues His-79, His-238, and Asp-242 each coordinate Zn(2+). Residue His-265 is the Proton donor of the active site.

The protein belongs to the LpxC family. Requires Zn(2+) as cofactor.

It carries out the reaction a UDP-3-O-[(3R)-3-hydroxyacyl]-N-acetyl-alpha-D-glucosamine + H2O = a UDP-3-O-[(3R)-3-hydroxyacyl]-alpha-D-glucosamine + acetate. Its pathway is glycolipid biosynthesis; lipid IV(A) biosynthesis; lipid IV(A) from (3R)-3-hydroxytetradecanoyl-[acyl-carrier-protein] and UDP-N-acetyl-alpha-D-glucosamine: step 2/6. Catalyzes the hydrolysis of UDP-3-O-myristoyl-N-acetylglucosamine to form UDP-3-O-myristoylglucosamine and acetate, the committed step in lipid A biosynthesis. The sequence is that of UDP-3-O-acyl-N-acetylglucosamine deacetylase from Vibrio campbellii (strain ATCC BAA-1116).